A 448-amino-acid chain; its full sequence is DNA repair protein RadA (448 aa).

The C4-type zinc-finger motif lies at 10–27 (CQHCGFTSPKWLGKCVQC). Residue 96-103 (GSPGVGKS) participates in ATP binding. The RadA KNRFG motif motif lies at 253 to 257 (KNRFG). Residues 351–448 (DVFINVSGGI…NVVGKIVEWM (98 aa)) form a lon-protease-like region.

Belongs to the RecA family. RadA subfamily.

DNA-dependent ATPase involved in processing of recombination intermediates, plays a role in repairing DNA breaks. Stimulates the branch migration of RecA-mediated strand transfer reactions, allowing the 3' invading strand to extend heteroduplex DNA faster. Binds ssDNA in the presence of ADP but not other nucleotides, has ATPase activity that is stimulated by ssDNA and various branched DNA structures, but inhibited by SSB. Does not have RecA's homology-searching function. This Helicobacter pylori (strain J99 / ATCC 700824) (Campylobacter pylori J99) protein is DNA repair protein RadA.